The sequence spans 422 residues: Target of rapamycin complex 2 subunit bit61 (422 aa).

Over residues Val-48–Asn-69 the composition is skewed to polar residues. The disordered stretch occupies residues Val-48 to Lys-101. 3 positions are modified to phosphoserine: Ser-109, Ser-132, and Ser-201.

It belongs to the BIT61 family. In terms of assembly, the target of rapamycin complex 2 (TORC2) is composed of at least bit61, pop3/wat1, sin1, ste20 and tor1. In terms of processing, either Thr-23, Thr-25 or Ser-26 and Ser-78 or Ser-79 are phosphorylated as well.

The protein localises to the cytoplasm. Its subcellular location is the nucleus. In terms of biological role, component of TORC2, which regulates multiple cellular processes to control cell growth in response to environmental signals. TORC2 is required for cell survival under various stress conditions. TORC2 positively controls G1 cell-cycle arrest, sexual development and amino acid uptake. Positively regulates amino acid uptake through the control of expression of amino acid permeases. The polypeptide is Target of rapamycin complex 2 subunit bit61 (Schizosaccharomyces pombe (strain 972 / ATCC 24843) (Fission yeast)).